A 150-amino-acid chain; its full sequence is Transcriptional repressor NrdR (150 aa).

Residues 3-34 (CPFCNFEESKVVDSRATDDNTTIRRRRECLNC) fold into a zinc finger. The ATP-cone domain occupies 49 to 139 (VLVVKKDLAR…VYRQFKDINT (91 aa)).

The protein belongs to the NrdR family. It depends on Zn(2+) as a cofactor.

Negatively regulates transcription of bacterial ribonucleotide reductase nrd genes and operons by binding to NrdR-boxes. In Clostridium botulinum (strain Eklund 17B / Type B), this protein is Transcriptional repressor NrdR.